The chain runs to 601 residues: DnaJ-like protein MG200 (601 aa).

The J domain occupies 5-77; the sequence is KRDYYEVLGI…DKYGFDGVDG (73 aa). 2 disordered regions span residues 143 to 163 and 205 to 272; these read VQQN…VPGE and VDSE…EPIP. Residues 151–160 show a composition bias toward basic and acidic residues; sequence KDPDELRSKV. Positions 263-272 are enriched in pro residues; it reads EPTPIPEPIP.

The protein is DnaJ-like protein MG200 of Mycoplasma genitalium (strain ATCC 33530 / DSM 19775 / NCTC 10195 / G37) (Mycoplasmoides genitalium).